Consider the following 325-residue polypeptide: Eukaryotic translation initiation factor 3 subunit I (325 aa).

WD repeat units follow at residues 1–39 (MKPI…VWYS), 43–81 (ERLG…LWDC), 87–127 (LALL…FFDL), 135–175 (NNEP…QYSA), and 180–217 (VLVN…LFDS). At threonine 219 the chain carries Phosphothreonine. 2 WD repeats span residues 221–267 (EHQK…KFEA) and 275–316 (EEEF…YFDP). Residue lysine 264 is modified to N6-acetyllysine. Residue lysine 282 forms a Glycyl lysine isopeptide (Lys-Gly) (interchain with G-Cter in ubiquitin) linkage. Tyrosine 308 carries the post-translational modification Phosphotyrosine.

Component of the eukaryotic translation initiation factor 3 (eIF-3) complex, which is composed of 13 subunits: EIF3A, EIF3B, EIF3C, EIF3D, EIF3E, EIF3F, EIF3G, EIF3H, EIF3I, EIF3J, EIF3K, EIF3L and EIF3M. The eIF-3 complex appears to include 3 stable modules: module A is composed of EIF3A, EIF3B, EIF3G and EIF3I; module B is composed of EIF3F, EIF3H, and EIF3M; and module C is composed of EIF3C, EIF3D, EIF3E, EIF3K and EIF3L. EIF3C of module C binds EIF3B of module A and EIF3H of module B, thereby linking the three modules. EIF3J is a labile subunit that binds to the eIF-3 complex via EIF3B. The eIF-3 complex interacts with RPS6KB1 under conditions of nutrient depletion. Mitogenic stimulation leads to binding and activation of a complex composed of MTOR and RPTOR, leading to phosphorylation and release of RPS6KB1 and binding of EIF4B to eIF-3. In terms of processing, phosphorylated by TGF-beta type II receptor.

The protein resides in the cytoplasm. Its function is as follows. Component of the eukaryotic translation initiation factor 3 (eIF-3) complex, which is required for several steps in the initiation of protein synthesis. The eIF-3 complex associates with the 40S ribosome and facilitates the recruitment of eIF-1, eIF-1A, eIF-2:GTP:methionyl-tRNAi and eIF-5 to form the 43S pre-initiation complex (43S PIC). The eIF-3 complex stimulates mRNA recruitment to the 43S PIC and scanning of the mRNA for AUG recognition. The eIF-3 complex is also required for disassembly and recycling of post-termination ribosomal complexes and subsequently prevents premature joining of the 40S and 60S ribosomal subunits prior to initiation. The eIF-3 complex specifically targets and initiates translation of a subset of mRNAs involved in cell proliferation, including cell cycling, differentiation and apoptosis, and uses different modes of RNA stem-loop binding to exert either translational activation or repression. This is Eukaryotic translation initiation factor 3 subunit I from Homo sapiens (Human).